The following is a 113-amino-acid chain: Na(+)/H(+) antiporter subunit C (113 aa).

A run of 3 helical transmembrane segments spans residues Leu4–Leu21, Val28–Gly47, and Pro67–Val89.

Belongs to the CPA3 antiporters (TC 2.A.63) subunit C family. Forms a heterooligomeric complex that consists of seven subunits: MrpA, MrpB, MrpC, MrpD, MrpE, MrpF and MrpG.

Its subcellular location is the cell membrane. In terms of biological role, mrp complex is a Na(+)/H(+) antiporter that is considered to be the major Na(+) excretion system in B.subtilis. Has a major role in Na(+) resistance and a minor role in Na(+)- and K(+)-dependent pH homeostasis as compared to TetB. MrpA may be the actual Na(+)/H(+) antiporter, although the six other Mrp proteins are all required for Na(+)/H(+) antiport activity and Na(+) resistance. MrpA is required for initiation of sporulation when external Na(+) concentration increases. Also transports Li(+) but not K(+), Ca(2+) or Mg(2+). This chain is Na(+)/H(+) antiporter subunit C (mrpC), found in Bacillus subtilis (strain 168).